We begin with the raw amino-acid sequence, 388 residues long: Trichodiene synthase (388 aa).

Positions 109, 173, 234, 238, 242, and 248 each coordinate Mg(2+). The interval 109–113 (DDSRE) is aspartate-rich domain.

This sequence belongs to the trichodiene synthase family. It depends on Mg(2+) as a cofactor. Requires Mn(2+) as cofactor.

It carries out the reaction (2E,6E)-farnesyl diphosphate = trichodiene + diphosphate. It participates in sesquiterpene biosynthesis; trichothecene biosynthesis. Trichodiene synthase; part of the gene cluster that mediates the production of the antimicrobial trichothecene harzianum A (HA) that plays a role in Botrytis cinerea antagonistic activity and plant defense priming. The biosynthesis of harzianum A begins with the cyclization of farnesyl diphosphate to trichodiene and is catalyzed by the trichodiene synthase TRI5. Trichodiene undergoes a series of oxygenations catalyzed by the cytochrome P450 monooxygenase TRI4. TRI4 controls the addition of 3 oxygens at C-2, C-11, and the C-12, C-13-epoxide to form the intermediate isotrichodiol. Isotrichodiol then undergoes a non-enzymatic isomerization and cyclization to form 12,13-epoxytrichothec-9-ene (EPT) which is further converted to trichodermol by the cytochrome P450 monooxygenase TRI11 via C-4 hydroxylation. The last step of HA synthesis is esterification of an octatriendioyl moiety to the C-4 oxygen of trichodermol. The octatriendioyl moiety is probably produced by the polyketide synthase TRI17 and the esterification performed by the trichothecene O-acetyltransferase TRI3. The polypeptide is Trichodiene synthase (Trichoderma arundinaceum).